Consider the following 416-residue polypeptide: MDLTNMGIAAKDAAFHLATASTAQKNKALAIIADELEANAATILEANAKDIELGREAGLTDALLDRLLLNEERLTGIANDVRNVISLNDPVGSEIDSKALENGMSLSRRRVPLGVVGVIYEARPNVTIDIAALCLKTGNASILRGGKETFFSNMELVKVIQSALEKAELPAASVQYIEKPDRELVSQLLKLDDYVDMIIPRGGAGLHKMCKENSTIPVIIGGFGISHIFVDESADLEKSVDVVENSKVQRPSACNSLDTLLVHEAVAEAFLAKLTQRLAGKVTLVADARAKSLLAGFEDQRDAVEGDFDTEWLSYTLGVKVVADVAEAIDHMRVHNASHSDAIMTNSLESSERFINSVGSAAVYVNASTRFTDGAQFGLGAEVAVSTQKLHARGPMGLEELTSYKWVGKANYLVRG.

The protein belongs to the gamma-glutamyl phosphate reductase family.

Its subcellular location is the cytoplasm. The enzyme catalyses L-glutamate 5-semialdehyde + phosphate + NADP(+) = L-glutamyl 5-phosphate + NADPH + H(+). It participates in amino-acid biosynthesis; L-proline biosynthesis; L-glutamate 5-semialdehyde from L-glutamate: step 2/2. Catalyzes the NADPH-dependent reduction of L-glutamate 5-phosphate into L-glutamate 5-semialdehyde and phosphate. The product spontaneously undergoes cyclization to form 1-pyrroline-5-carboxylate. The polypeptide is Gamma-glutamyl phosphate reductase (Vibrio atlanticus (strain LGP32) (Vibrio splendidus (strain Mel32))).